The sequence spans 346 residues: GTPase Obg (346 aa).

The Obg domain maps to 1–159; sequence MRFVDEVTFV…RELRLELQLL (159 aa). Positions 128 to 148 are disordered; it reads LHFKSSTNRAPRQSTEGTAGE. Positions 130–144 are enriched in polar residues; that stretch reads FKSSTNRAPRQSTEG. An OBG-type G domain is found at 160 to 335; the sequence is ADVGLLGMPN…LCGDIMNDLE (176 aa). Residues 166–173, 191–195, 213–216, 285–288, and 316–318 each bind GTP; these read GMPNVGKS, FTTLY, DIPG, NRLD, and SGL. The Mg(2+) site is built by Ser173 and Thr193.

It belongs to the TRAFAC class OBG-HflX-like GTPase superfamily. OBG GTPase family. In terms of assembly, monomer. Mg(2+) serves as cofactor.

Its subcellular location is the cytoplasm. An essential GTPase which binds GTP, GDP and possibly (p)ppGpp with moderate affinity, with high nucleotide exchange rates and a fairly low GTP hydrolysis rate. Plays a role in control of the cell cycle, stress response, ribosome biogenesis and in those bacteria that undergo differentiation, in morphogenesis control. In Halorhodospira halophila (strain DSM 244 / SL1) (Ectothiorhodospira halophila (strain DSM 244 / SL1)), this protein is GTPase Obg.